Here is a 479-residue protein sequence, read N- to C-terminus: Anaerobic nitric oxide reductase flavorubredoxin (479 aa).

The zinc metallo-hydrolase stretch occupies residues 30–210; sequence LRGSSYNSYL…PFSRLVTPKI (181 aa). 6 residues coordinate Fe cation: histidine 79, glutamate 81, aspartate 83, histidine 147, aspartate 166, and histidine 227. The Flavodoxin-like domain maps to 254-393; sequence ITIFYDTMSN…LCREHGREIA (140 aa). Residues 260-264 and 342-369 contribute to the FMN site; these read TMSNN and AFGS…EMSL. Positions 423 to 474 constitute a Rubredoxin-like domain; it reads GPRMQCSVCQWIYDPAKGEPMQDVAPGTPWSEVPDNFLCPECSLGKDVFEEL. Residues cysteine 428, cysteine 431, cysteine 461, and cysteine 464 each coordinate Fe cation.

This sequence in the N-terminal section; belongs to the zinc metallo-hydrolase group 3 family. In terms of assembly, homotetramer. Fe cation is required as a cofactor. It depends on FMN as a cofactor.

The protein resides in the cytoplasm. It participates in nitrogen metabolism; nitric oxide reduction. In terms of biological role, anaerobic nitric oxide reductase; uses NADH to detoxify nitric oxide (NO), protecting several 4Fe-4S NO-sensitive enzymes. Has at least 2 reductase partners, only one of which (NorW, flavorubredoxin reductase) has been identified. NO probably binds to the di-iron center; electrons enter from the NorW at rubredoxin and are transferred sequentially to the FMN center and the di-iron center. Also able to function as an aerobic oxygen reductase. This is Anaerobic nitric oxide reductase flavorubredoxin from Escherichia coli O139:H28 (strain E24377A / ETEC).